The sequence spans 786 residues: MAMWIQAQQLQGDALHQMQALYGQHFPIEVRHYLSQWIESQAWDSIDLDNPQENIKATQLLEGLVQELQKKAEHQVGEDGFLLKIKLGHYATQLQSTYDRCPMELVRCIRHILYNEQRLVREANNGSSPAGSLADAMSQKHLQINQTFEELRLITQDTENELKKLQQTQEYFIIQYQESLRIQAQFAQLGQLNPQERMSRETALQQKQVSLETWLQREAQTLQQYRVELAEKHQKTLQLLRKQQTIILDDELIQWKRRQQLAGNGGPPEGSLDVLQSWCEKLAEIIWQNRQQIRRAEHLCQQLPIPGPVEEMLAEVNATITDIISALVTSTFIIEKQPPQVLKTQTKFAATVRLLVGGKLNVHMNPPQVKATIISEQQAKSLLKNENTRNDYSGEILNNCCVMEYHQATGTLSAHFRNMSLKRIKRSDRRGAESVTEEKFTILFDSQFSVGGNELVFQVKTLSLPVVVIVHGSQDNNATATVLWDNAFAEPGRVPFAVPDKVLWPQLCEALNMKFKAEVQSNRGLTKENLVFLAQKLFNISSNHLEDYNSMSVSWSQFNRENLPGRNYTFWQWFDGVMEVLKKHLKPHWNDGAILGFVNKQQAHDLLINKPDGTFLLRFSDSEIGGITIAWKFDSQERMFWNLMPFTTRDFSIRSLADRLGDLNYLIYVFPDRPKDEVYSKYYTPVPCEPATAKAADGYVKPQIKQVVPEFANASTDAGSGATYMDQAPSPVVCPQAHYNMYPPNPDSVLDTDGDFDLEDTMDVARRVEELLGRPMDSQWIPHAQS.

Y90 is modified (phosphotyrosine). Residue S128 is modified to Phosphoserine. The SH2 domain occupies 589 to 686; that stretch reads WNDGAILGFV…EVYSKYYTPV (98 aa). Phosphotyrosine occurs at positions 682 and 699.

It belongs to the transcription factor STAT family. In terms of assembly, upon activation, forms a homodimer or a heterodimer with a related family member. Binds NR3C1. Interacts with NCOA1. Interacts with SOCS7. Interacts (via SH2 domain) with INSR. Interacts with CPEB3; this inhibits STAT5B-mediated transcriptional activation. Tyrosine phosphorylated in response to signaling via activated KIT, resulting in translocation to the nucleus. Tyrosine phosphorylated in response to signaling via activated FLT3; wild-type FLT3 results in much weaker phosphorylation than constitutively activated mutant FLT3. Alternatively, can be phosphorylated by JAK2. Phosphorylation at Tyr-699 by PTK6 or HCK leads to an increase of its transcriptional activity. In the virgin, found in most tissues. Particularly abundant in muscle tissue of virgin and lactating females, and of males.

It localises to the cytoplasm. The protein resides in the nucleus. Its function is as follows. Carries out a dual function: signal transduction and activation of transcription. Mediates cellular responses to the cytokine KITLG/SCF and other growth factors. Binds to the GAS element and activates PRL-induced transcription. Positively regulates hematopoietic/erythroid differentiation. This chain is Signal transducer and activator of transcription 5B (Stat5b), found in Mus musculus (Mouse).